The chain runs to 159 residues: Immunoglobulin J chain (159 aa).

The first 21 residues, 1–21 (MKTHLLLWGVLAIFVKAVLVT), serve as a signal peptide directing secretion. Cystine bridges form between Cys34-Cys123, Cys93-Cys113, and Cys131-Cys156. The N-linked (GlcNAc...) (complex) asparagine glycan is linked to Asn70.

Part of the secretory IgA (sIgA) complex that consists of two, four or five IgA monomers, and two additional non-Ig polypeptides, namely the JCHAIN and the secretory component (the proteolytic product of PIGR). Part of the secretory IgM (sIgM) complex that consist of five IgM monomers, and two additional non-Ig polypeptides, namely the JCHAIN and the secretory component (the proteolytic product of PIGR). JCHAIN-containing IgM interacts (via CH4 domain) with FCRM (via Ig-like domain).

It is found in the secreted. Serves to link two monomer units of either IgM or IgA. In the case of IgM, the J chain-joined dimer is a nucleating unit for the IgM pentamer, and in the case of IgA it induces dimers and/or larger polymers. It also helps to bind these immunoglobulins to secretory component. This is Immunoglobulin J chain from Mus musculus (Mouse).